Consider the following 437-residue polypeptide: Ribosomal protein uS12 methylthiotransferase RimO (437 aa).

An MTTase N-terminal domain is found at 9 to 124 (TKVNIVTLGC…LPAILKKFRA (116 aa)). Residues Cys18, Cys56, Cys90, Cys151, Cys155, and Cys158 each contribute to the [4Fe-4S] cluster site. The 231-residue stretch at 137–367 (TTPSHYAYVK…MSIQEGISAE (231 aa)) folds into the Radical SAM core domain. Positions 370–437 (EKKIGNTYKV…EFDLFGEIVK (68 aa)) constitute a TRAM domain.

Belongs to the methylthiotransferase family. RimO subfamily. Requires [4Fe-4S] cluster as cofactor.

It is found in the cytoplasm. The catalysed reaction is L-aspartate(89)-[ribosomal protein uS12]-hydrogen + (sulfur carrier)-SH + AH2 + 2 S-adenosyl-L-methionine = 3-methylsulfanyl-L-aspartate(89)-[ribosomal protein uS12]-hydrogen + (sulfur carrier)-H + 5'-deoxyadenosine + L-methionine + A + S-adenosyl-L-homocysteine + 2 H(+). Functionally, catalyzes the methylthiolation of an aspartic acid residue of ribosomal protein uS12. The polypeptide is Ribosomal protein uS12 methylthiotransferase RimO (Cytophaga hutchinsonii (strain ATCC 33406 / DSM 1761 / CIP 103989 / NBRC 15051 / NCIMB 9469 / D465)).